The chain runs to 274 residues: Large ribosomal subunit protein uL2c (274 aa).

Residues 224–274 are disordered; it reads NPVDHPHGGGEGRAPIGRKKPTTPWGYPALGRKSRKRNKYSEKFILRHRSK.

It belongs to the universal ribosomal protein uL2 family. As to quaternary structure, part of the 50S ribosomal subunit.

It is found in the plastid. Its subcellular location is the chloroplast. The chain is Large ribosomal subunit protein uL2c (rpl2) from Ipomoea purpurea (Common morning glory).